The following is a 1738-amino-acid chain: Gag-Pol polyprotein (1738 aa).

Gly2 carries the N-myristoyl glycine; by host lipid modification. The PTAP/PSAP motif signature appears at 111-114 (PSAP). Pro residues predominate over residues 111 to 124 (PSAPSLPPEPPLST). The interval 111-218 (PSAPSLPPEP…STTSQAFPLR (108 aa)) is disordered. Positions 130–134 (LYPAL) match the LYPX(n)L motif motif. Residues 161-173 (DPPPYRDPGPPSP) show a composition bias toward pro residues. The PPXY motif signature appears at 162–165 (PPPY). A Phosphoserine; by host modification is found at Ser192. The interaction with host PIAS4 stretch occupies residues 345 to 393 (GRSPTNLAKVKGITQGPNESPSAFLERLKEAYRRYTPYDPEDPGQETNV). Residues 430-435 (IFNKRE) form an interaction with host UBE2I region. Composition is skewed to basic and acidic residues over residues 434–466 (RETP…EKER) and 486–499 (RQDR…RPQL). Disordered regions lie at residues 434–499 (RETP…RPQL) and 513–552 (WARD…EPRI). The stretch at 438-478 (EEREERVRRETEEKEERRRAEDERREKERDRRRHREMSKLL) forms a coiled coil. Residues 502–519 (DQCAYCKEKGHWARDCPK) form a CCHC-type zinc finger. Positions 561 to 631 (VTFLVDTGAQ…CPYPLLGRDL (71 aa)) constitute a Peptidase A2 domain. Residue Asp566 is the Protease; shared with dimeric partner of the active site. Positions 741–932 (LDQGILVPCQ…KQVKYLGYLL (192 aa)) constitute a Reverse transcriptase domain. Residues Asp809, Asp883, Asp884, Asp1183, Glu1221, Asp1242, and Asp1312 each contribute to the Mg(2+) site. The RNase H type-1 domain occupies 1174-1320 (PDADHTWYTD…ADQAAREVAT (147 aa)). The HHCC-type zinc finger occupies 1387–1427 (HQLTHLSFSKTKALLERSYSPYYMLNRDRTLKDITETCKAC). The region spanning 1444-1602 (RGHRPGTHWE…TPYEILYGAP (159 aa)) is the Integrase catalytic domain. Mg(2+)-binding residues include Asp1455 and Asp1514.

This sequence belongs to the retroviral Pol polyprotein family. Homohexamer; further associates as homomultimer. The virus core is composed of a lattice formed from hexagonal rings, each containing six capsid monomers. Interacts with mouse UBE2I and mouse PIAS4. In terms of assembly, interacts (via PPXY motif) with host NEDD4. Interacts (via PSAP motif) with host TSG101. Interacts (via LYPX(n)L motif) with host PDCD6IP. As to quaternary structure, the reverse transcriptase is a monomer (Potential). Interacts (via RNase domains) with host release factor ETF1; this interaction is essential for translational readthrough of amber codon between viral gag and pol genes, as well as for viral replication. Homodimer. The cofactor is Mg(2+). In terms of processing, ubiquitinated by ITCH. Gag can recruit the ubiquitin ligase Itch in an L domain-independent manner to facilitate virus release via a mechanism that involves Gag ubiquitination. Post-translationally, specific enzymatic cleavages by the viral protease yield mature proteins. The protease is released by autocatalytic cleavage. The polyprotein is cleaved during and after budding, this process is termed maturation. Sumoylated; which is required for virus replication. In terms of processing, phosphorylated on serine residues.

The protein localises to the virion. Its subcellular location is the host cell membrane. It localises to the host late endosome membrane. It is found in the host endosome. The protein resides in the host multivesicular body. The protein localises to the host cytoplasm. It catalyses the reaction DNA(n) + a 2'-deoxyribonucleoside 5'-triphosphate = DNA(n+1) + diphosphate. The catalysed reaction is Endonucleolytic cleavage to 5'-phosphomonoester.. With respect to regulation, most efficiently inhibited by Amprenavir, which is able to block Gag-Pol processing in infected cells. In terms of biological role, plays a role in budding and is processed by the viral protease during virion maturation outside the cell. During budding, it recruits, in a PPXY-dependent or independent manner, Nedd4-like ubiquitin ligases that conjugate ubiquitin molecules to Gag-Pol, or to Gag-Pol binding host factors. Interaction with HECT ubiquitin ligases probably links the viral protein to the host ESCRT pathway and facilitates release. Functionally, targets Gag and gag-pol polyproteins to the plasma membrane via a multipartite membrane binding signal, that includes its myristoylated N-terminus. Also mediates nuclear localization of the pre-integration complex. Its function is as follows. Constituent of the pre-integration complex (PIC) which tethers the latter to mitotic chromosomes. This allows the integration of the viral genome into the host DNA. Forms the spherical core of the virion that encapsulates the genomic RNA-nucleocapsid complex. In terms of biological role, involved in the packaging and encapsidation of two copies of the genome. Binds with high affinity to conserved UCUG elements within the packaging signal, located near the 5'-end of the genome. This binding is dependent on genome dimerization. Acts as a nucleic acid chaperone which is involved in rearrangement of nucleic acid secondary structures during gRNA retrotranscription. Functionally, the aspartyl protease mediates proteolytic cleavages of Gag and Gag-Pol polyproteins during or shortly after the release of the virion from the plasma membrane. Cleavages take place as an ordered, step-wise cascade to yield mature proteins. This process is called maturation. Displays maximal activity during the budding process just prior to particle release from the cell (Potential). Cleaves the translation initiation factor eIF4G leading to the inhibition of host cap-dependent translation. Its function is as follows. RT is a multifunctional enzyme that converts the viral dimeric RNA genome into dsDNA in the cytoplasm, shortly after virus entry into the cell. This enzyme displays a DNA polymerase activity that can copy either DNA or RNA templates, and a ribonuclease H (RNase H) activity that cleaves the RNA strand of RNA-DNA heteroduplexes in a partially processive 3' to 5' endonucleasic mode. Conversion of viral genomic RNA into dsDNA requires many steps. A tRNA binds to the primer-binding site (PBS) situated at the 5' end of the viral RNA. RT uses the 3' end of the tRNA primer to perform a short round of RNA-dependent minus-strand DNA synthesis. The reading proceeds through the U5 region and ends after the repeated (R) region which is present at both ends of viral RNA. The portion of the RNA-DNA heteroduplex is digested by the RNase H, resulting in a ssDNA product attached to the tRNA primer. This ssDNA/tRNA hybridizes with the identical R region situated at the 3' end of viral RNA. This template exchange, known as minus-strand DNA strong stop transfer, can be either intra- or intermolecular. RT uses the 3' end of this newly synthesized short ssDNA to perform the RNA-dependent minus-strand DNA synthesis of the whole template. RNase H digests the RNA template except for a polypurine tract (PPT) situated at the 5' end of the genome. It is not clear if both polymerase and RNase H activities are simultaneous. RNase H probably can proceed both in a polymerase-dependent (RNA cut into small fragments by the same RT performing DNA synthesis) and a polymerase-independent mode (cleavage of remaining RNA fragments by free RTs). Secondly, RT performs DNA-directed plus-strand DNA synthesis using the PPT that has not been removed by RNase H as primers. PPT and tRNA primers are then removed by RNase H. The 3' and 5' ssDNA PBS regions hybridize to form a circular dsDNA intermediate. Strand displacement synthesis by RT to the PBS and PPT ends produces a blunt ended, linear dsDNA copy of the viral genome that includes long terminal repeats (LTRs) at both ends. Catalyzes viral DNA integration into the host chromosome, by performing a series of DNA cutting and joining reactions. This enzyme activity takes place after virion entry into a cell and reverse transcription of the RNA genome in dsDNA. The first step in the integration process is 3' processing. This step requires a complex comprising the viral genome, matrix protein and integrase. This complex is called the pre-integration complex (PIC). The integrase protein removes 2 nucleotides from each 3' end of the viral DNA, leaving recessed CA OH's at the 3' ends. In the second step that requires cell division, the PIC enters cell nucleus. In the third step, termed strand transfer, the integrase protein joins the previously processed 3' ends to the 5' ends of strands of target cellular DNA at the site of integration. The last step is viral DNA integration into host chromosome. The chain is Gag-Pol polyprotein (pol) from Friend murine leukemia virus (isolate PVC-211) (FrMLV).